The sequence spans 521 residues: Ribonuclease Y (521 aa).

The helical transmembrane segment at 3-23 threads the bilayer; it reads VSIWMLVITVLAAVAAYFAGS. Residues 211 to 271 enclose the KH domain; it reads TVSVVPLPSD…VRREVARMSL (61 aa). The 94-residue stretch at 337-430 folds into the HD domain; the sequence is IYQHSLEVAF…VQAADALSGA (94 aa).

This sequence belongs to the RNase Y family.

The protein resides in the cell membrane. Its function is as follows. Endoribonuclease that initiates mRNA decay. The polypeptide is Ribonuclease Y (Pelobacter propionicus (strain DSM 2379 / NBRC 103807 / OttBd1)).